Here is a 775-residue protein sequence, read N- to C-terminus: Metal transporter CNNM4 (775 aa).

The Extracellular portion of the chain corresponds to 1–178 (MAPVGGGGRP…LLFMVEEPGR (178 aa)). 2 N-linked (GlcNAc...) asparagine glycosylation sites follow: Asn-85 and Asn-122. In terms of domain architecture, CNNM transmembrane spans 178–358 (RFLPLWLHIL…EPYNDLVKEE (181 aa)). Residues 179–199 (FLPLWLHILLITVLLVLSGIF) traverse the membrane as a helical segment. Residues 200 to 240 (SGLNLGLMALDPMELRIVQNCGTEKERRYARKIEPIRRKGN) are Cytoplasmic-facing. The segment at residues 241-261 (YLLCSLLLGNVLVNTSLTILL) is an intramembrane region (helical). Residues 262–264 (DNL) lie on the Cytoplasmic side of the membrane. Residues 265 to 285 (IGSGLMAVASSTIGIVIFGEI) traverse the membrane as a helical segment. The Extracellular segment spans residues 286–293 (LPQALCSR). A helical transmembrane segment spans residues 294–316 (HGLAVGANTILLTKFFMLLTFPL). Residues 317–775 (SFPISKLLDF…LHKASHENAI (459 aa)) lie on the Cytoplasmic side of the membrane. 2 consecutive CBS domains span residues 377-438 (MTQL…CTPL) and 445-511 (YNHP…ILDE). Residues Ser-660, Ser-664, and Ser-770 each carry the phosphoserine modification.

Belongs to the ACDP family. Interacts with COX11. As to expression, widely expressed. Highly expressed in heart.

The protein resides in the cell membrane. Functionally, probable metal transporter. The interaction with the metal ion chaperone COX11 suggests that it may play a role in sensory neuron functions. May play a role in biomineralization and retinal function. This is Metal transporter CNNM4 (CNNM4) from Homo sapiens (Human).